Consider the following 875-residue polypeptide: Metal transporter CNNM2 (875 aa).

Residues 1–250 (MIGCGACEPE…TKMIVGEEKK (250 aa)) are Extracellular-facing. Residue asparagine 112 is glycosylated (N-linked (GlcNAc...) asparagine). The segment at 122–148 (EHERRRHTPGERGLGGPAPPEPDSGPQ) is disordered. A helical transmembrane segment spans residues 251–271 (FLLPFWLQVIFISLLLCLSGM). A CNNM transmembrane domain is found at 251–431 (FLLPFWLQVI…DPYNDLVKEE (181 aa)). Residues 272-313 (FSGLNLGLMALDPMELRIVQNCGTEKEKNYAKRIEPVRRQGN) lie on the Cytoplasmic side of the membrane. Positions 314-334 (YLLCSLLLGNVLVNTTLTILL) form an intramembrane region, helical. The Cytoplasmic segment spans residues 335-338 (DDIA). A helical membrane pass occupies residues 339–359 (GSGLVAVVVSTIGIVIFGEIV). Over 360-368 (PQAICSRHG) the chain is Extracellular. Residues 369-389 (LAVGANTIFLTKFFMMMTFPA) traverse the membrane as a helical segment. Residues 390-875 (SYPVSKLLDC…NHSLHSEGAI (486 aa)) are Cytoplasmic-facing. CBS domains lie at 450 to 511 (MTPL…CTPL) and 518 to 584 (YNHP…ILDE). The disordered stretch occupies residues 741–763 (AGSPGENKSPPRPCGLNHSDSLS). Serine 761 bears the Phosphoserine mark.

The protein belongs to the ACDP family.

Its subcellular location is the cell membrane. In terms of biological role, divalent metal cation transporter. Mediates transport of divalent metal cations in an order of Mg(2+) &gt; Co(2+) &gt; Mn(2+) &gt; Sr(2+) &gt; Ba(2+) &gt; Cu(2+) &gt; Fe(2+). The polypeptide is Metal transporter CNNM2 (Cnnm2) (Rattus norvegicus (Rat)).